A 35-amino-acid chain; its full sequence is U1-theraphotoxin-Hs1f (35 aa).

3 disulfide bridges follow: Cys3/Cys16, Cys7/Cys27, and Cys21/Cys32.

The protein belongs to the neurotoxin 12 (Hwtx-2) family. 02 (Hwtx-2) subfamily. As to expression, expressed by the venom gland.

The protein resides in the secreted. In terms of biological role, blocks neuromuscular transmission. Acts cooperatively to potentiate the activity of huwentoxin-I. Paralyzes locusts and kills mice following intracerebroventricular injection. This Cyriopagopus schmidti (Chinese bird spider) protein is U1-theraphotoxin-Hs1f.